The following is a 214-amino-acid chain: MRVKHKPWAKDRLEEFPAIYIKNPEDFKGQWREVFGNDNPVHIEIGSGKGQFISGMAKANPEINYIGIEMIESVLVSALDKAIEADVSNLRLVARDAKLLEECFEKGEIAQIYLNFSDPWPKKRHTKRRLTNPTFLTIYERLLPEAGEIHFKTDNRSLFEYSLVAFSEYNMLLTFVSLDLHNSDYEGNIKTEYEEKFSAKGFPIYRLEAKFDRN.

Residues Glu44, Glu69, Asp96, and Asp118 each coordinate S-adenosyl-L-methionine. Asp118 is a catalytic residue. Substrate-binding positions include Lys122, Asp154, and 191–194 (TEYE).

This sequence belongs to the class I-like SAM-binding methyltransferase superfamily. TrmB family.

It catalyses the reaction guanosine(46) in tRNA + S-adenosyl-L-methionine = N(7)-methylguanosine(46) in tRNA + S-adenosyl-L-homocysteine. It functions in the pathway tRNA modification; N(7)-methylguanine-tRNA biosynthesis. In terms of biological role, catalyzes the formation of N(7)-methylguanine at position 46 (m7G46) in tRNA. The protein is tRNA (guanine-N(7)-)-methyltransferase of Listeria monocytogenes serotype 4b (strain F2365).